We begin with the raw amino-acid sequence, 405 residues long: Glucose-1-phosphate adenylyltransferase (405 aa).

Alpha-D-glucose 1-phosphate contacts are provided by residues Y96, G161, 176–177 (EK), and S194.

Belongs to the bacterial/plant glucose-1-phosphate adenylyltransferase family. As to quaternary structure, homotetramer.

The catalysed reaction is alpha-D-glucose 1-phosphate + ATP + H(+) = ADP-alpha-D-glucose + diphosphate. It participates in glycan biosynthesis; glycogen biosynthesis. In terms of biological role, involved in the biosynthesis of ADP-glucose, a building block required for the elongation reactions to produce glycogen. Catalyzes the reaction between ATP and alpha-D-glucose 1-phosphate (G1P) to produce pyrophosphate and ADP-Glc. The protein is Glucose-1-phosphate adenylyltransferase of Aliivibrio fischeri (strain MJ11) (Vibrio fischeri).